A 781-amino-acid polypeptide reads, in one-letter code: Catenin beta-1 (781 aa).

Ala-2 carries the N-acetylalanine modification. The segment at Ala-2 to Ser-23 is interaction with VCL. Ser-23 bears the Phosphoserine; by GSK3-beta; alternate mark. O-linked (GlcNAc) serine; alternate glycosylation is present at Ser-23. Residue Ser-29 is modified to Phosphoserine; by GSK3-beta. Phosphoserine; by GSK3-beta and HIPK2 is present on residues Ser-33 and Ser-37. Residues Gly-34–Asp-56 form a disordered region. Thr-41 carries the post-translational modification Phosphothreonine; by GSK3-beta. Ser-45 is subject to Phosphoserine. Lys-49 carries the N6-acetyllysine modification. Tyr-64 carries the post-translational modification Phosphotyrosine; by PTK6. Residue Tyr-142 is modified to Phosphotyrosine; by FYN and PTK6. ARM repeat units lie at residues Arg-151–Ser-191, Gln-193–Ser-234, Gly-235–Ala-276, Gly-277–Ser-318, Gly-319–Ala-360, Gly-361–Ser-389, Gly-400–Val-441, Gly-442–Ala-484, Tyr-489–Gln-530, Gly-531–Glu-571, Asn-594–Ala-636, and Thr-637–Lys-666. Residues Leu-156–Leu-178 form an interaction with BCL9 region. Residue Ser-191 is modified to Phosphoserine; by CDK5. Position 246 is a phosphoserine; by CDK5 (Ser-246). Phosphotyrosine occurs at positions 331 and 333. Position 552 is a phosphoserine; by AMPK (Ser-552). The residue at position 556 (Thr-556) is a Phosphothreonine. Cys-619 carries the S-nitrosocysteine modification. Ser-675 is modified (phosphoserine). The tract at residues Glu-705–Leu-781 is disordered. Basic and acidic residues predominate over residues Met-734–Gly-745. The interval Asn-772 to Leu-781 is interaction with SCRIB.

It belongs to the beta-catenin family. As to quaternary structure, two separate complex-associated pools are found in the cytoplasm. The majority is present as component of an E-cadherin/ catenin adhesion complex composed of at least E-cadherin/CDH1 and beta-catenin/CTNNB1, and possibly alpha-catenin/CTNNA1; the complex is located to adherens junctions. The stable association of CTNNA1 is controversial as CTNNA1 was shown not to bind to F-actin when assembled in the complex. Alternatively, the CTNNA1-containing complex may be linked to F-actin by other proteins such as LIMA1. Another cytoplasmic pool is part of a large complex containing AXIN1, AXIN2, APC, CSNK1A1 and GSK3B that promotes phosphorylation on N-terminal Ser and Thr residues and ubiquitination of CTNNB1 via BTRC and its subsequent degradation by the proteasome. Wnt-dependent activation of DVL antagonizes the action of GSK3B. When GSK3B activity is inhibited the complex dissociates, CTNNB1 is dephosphorylated and is no longer targeted for destruction. The stabilized protein translocates to the nucleus, where it binds TCF/LEF-1 family members, BCL9, BCL9L and possibly also RUVBL1 and CHD8. Binds CTNNBIP and EP300. CTNNB1 forms a ternary complex with LEF1 and EP300 that is disrupted by CTNNBIP1 binding. Interacts with TAX1BP3 (via the PDZ domain); this interaction inhibits the transcriptional activity of CTNNB1. Interacts with AJAP1, BAIAP1, CARM1, CTNNA3, CXADR and PCDH11Y. Binds NHERF1. Interacts with GLIS2 and SLC30A9. Interacts with XIRP1 and MUC1. Interacts with PTPRU (via the cytoplasmic juxtamembrane domain) and with EMD. Interacts with SCRIB. Interacts with TNIK. Interacts with SESTD1 and TRPC4. Interacts directly with AXIN1; the interaction is regulated by CDK2 phosphorylation of AXIN1. Interacts with CAV1. Interacts with TRPV4. The TRPV4 and CTNNB1 complex can interact with CDH1. Interacts with VCL. Interacts with PTPRJ. Interacts with PKT7. Interacts with FAT1 (via the cytoplasmic domain). Interacts with NANOS1 and NDRG2. Interacts with NEK2, CDK2 and CDK5. Interacts with PTK6. Interacts with SOX7; this interaction may lead to proteasomal degradation of active CTNNB1 and thus inhibition of Wnt/beta-catenin-stimulated transcription. Identified in a complex with HINT1 and MITF. Interacts with FHIT. The CTNNB1 and TCF4 complex interacts with PML. Interacts with FERMT2. Identified in a complex with TCF4 and FERMT2. Interacts with RORA. May interact with P-cadherin/CDH3. Interacts with RAPGEF2. Interacts with RNF220. Interacts with CTNND2. Interacts (via the C-terminal region) with CBY1. The complex composed, at least, of APC, CTNNB1 and GSK3B interacts with JPT1; the interaction requires the inactive form of GSK3B (phosphorylated at 'Ser-9'). Interacts with DLG5. Interacts with FAM53B; promoting translocation to the nucleus. Interacts with TMEM170B. Interacts with AHI1. Interacts with GID8. Component of an cadherin:catenin adhesion complex composed of at least of CDH26, beta-catenin/CTNNB1, alpha-catenin/CTNNA1 and p120 catenin/CTNND1. Forms a complex comprising APPL1, RUVBL2, APPL2, HDAC1 and HDAC2. Interacts with IRF2BPL; mediates the ubiquitination and degradation of CTNNB1. Interacts with LMBR1L and AMFR. Interacts with LMBR1L. Interacts with SOX30; prevents interaction of CTNNB1 with TCF7L2/TCF4 and leads to inhibition of Wnt signaling. Interacts with SOX9; inhibiting CTNNB1 activity by competing with the binding sites of TCF/LEF within CTNNB1, thereby inhibiting the Wnt signaling. Interacts with SPN/CD43 cytoplasmic tail. Interacts (when phosphorylated at Tyr-333) with isoform M2 of PKM (PKM2); promoting transcription activation. Interacts with PKP2 (via HEAD domain). Interacts with CDH1. Interacts (when unphosphorylated) with FLYWCH1, perhaps preventing interaction of CTNNB1 with TCF4, and thereby regulating transcription activation; phosphorylation of CTNNB1 may inhibit the interaction. Interacts (via the central armadillo domains) with probable transcriptional regulator ADNP (via N-terminal region); interaction is direct and stabilizes CTNNB1 by modulating its phosphorylation by glycogen synthase kinase-3 beta GSK3B. Interacts with NR5A2. Interacts with DSG2; the interaction promotes localization of CTNNB1 at cell junctions thus reducing its nuclear localization and subsequent transcription of CTNNB1/TCF-target genes. Phosphorylation by GSK3B requires prior phosphorylation of Ser-45 by another kinase. Phosphorylation proceeds then from Thr-41 to Ser-33. Phosphorylated by NEK2. EGF stimulates tyrosine phosphorylation. Phosphorylated on Ser-33 and Ser-37 by HIPK2. This phosphorylation triggers proteasomal degradation. Phosphorylation at Ser-552 by AMPK promotes stabilization of the protein, enhancing TCF/LEF-mediated transcription. Phosphorylation on Ser-191 and Ser-246 by CDK5. Phosphorylation by CDK2 regulates insulin internalization. Phosphorylation by PTK6 at Tyr-64, Tyr-142, Tyr-331 and/or Tyr-333 with the predominant site at Tyr-64 is not essential for inhibition of transcriptional activity. Phosphorylation by SRC at Tyr-333 promotes interaction with isoform M2 of PKM (PKM2); promoting transcription activation. Post-translationally, ubiquitinated by the SCF(BTRC) E3 ligase complex when phosphorylated by GSK3B, leading to its degradation. Ubiquitinated by a E3 ubiquitin ligase complex containing UBE2D1, SIAH1, CACYBP/SIP, SKP1, APC and TBL1X, leading to its subsequent proteasomal degradation. Ubiquitinated and degraded following interaction with SOX9. Ubiquitinated via 'Lys-11'- and 'Lys-29'-linked ubiquitin chains by UBR5, leading to its stabilization. In terms of processing, S-nitrosylation at Cys-619 within adherens junctions promotes VEGF-induced, NO-dependent endothelial cell permeability by disrupting interaction with E-cadherin, thus mediating disassembly adherens junctions. O-glycosylation at Ser-23 decreases nuclear localization and transcriptional activity, and increases localization to the plasma membrane and interaction with E-cadherin CDH1. Post-translationally, deacetylated at Lys-49 by SIRT1.

The protein resides in the cytoplasm. It localises to the nucleus. Its subcellular location is the cytoskeleton. The protein localises to the cell junction. It is found in the adherens junction. The protein resides in the cell membrane. It localises to the microtubule organizing center. Its subcellular location is the centrosome. The protein localises to the spindle pole. It is found in the synapse. The protein resides in the cilium basal body. In terms of biological role, key downstream component of the canonical Wnt signaling pathway. In the absence of Wnt, forms a complex with AXIN1, AXIN2, APC, CSNK1A1 and GSK3B that promotes phosphorylation on N-terminal Ser and Thr residues and ubiquitination of CTNNB1 via BTRC and its subsequent degradation by the proteasome. In the presence of Wnt ligand, CTNNB1 is not ubiquitinated and accumulates in the nucleus, where it acts as a coactivator for transcription factors of the TCF/LEF family, leading to activate Wnt responsive genes. Also acts as a coactivator for other transcription factors, such as NR5A2. Promotes epithelial to mesenchymal transition/mesenchymal to epithelial transition (EMT/MET) via driving transcription of CTNNB1/TCF-target genes. Involved in the regulation of cell adhesion, as component of an E-cadherin:catenin adhesion complex. Acts as a negative regulator of centrosome cohesion. Involved in the CDK2/PTPN6/CTNNB1/CEACAM1 pathway of insulin internalization. Blocks anoikis of malignant kidney and intestinal epithelial cells and promotes their anchorage-independent growth by down-regulating DAPK2. Disrupts PML function and PML-NB formation by inhibiting RANBP2-mediated sumoylation of PML. Promotes neurogenesis by maintaining sympathetic neuroblasts within the cell cycle. Involved in chondrocyte differentiation via interaction with SOX9: SOX9-binding competes with the binding sites of TCF/LEF within CTNNB1, thereby inhibiting the Wnt signaling. Acts as a positive regulator of odontoblast differentiation during mesenchymal tooth germ formation, via promoting the transcription of differentiation factors such as LEF1, BMP2 and BMP4. Activity is repressed in a MSX1-mediated manner at the bell stage of mesenchymal tooth germ formation which prevents premature differentiation of odontoblasts. This is Catenin beta-1 from Bos taurus (Bovine).